Here is a 406-residue protein sequence, read N- to C-terminus: Proteasome-activating nucleotidase 1 (406 aa).

Residues Tyr13 to Ser72 are a coiled coil. Residues Gly194–Met199 and His333 contribute to the ATP site. Residues Ala404–Ala406 are docks into pockets in the proteasome alpha-ring to cause gate opening.

This sequence belongs to the AAA ATPase family. Homododecamer, in a proposed two stacked hexameric ring configuration, but may also form homohexamer. The hexameric complex has likely a two-ring architecture resembling a top hat that caps the 20S proteasome core at one or both ends. Upon ATP-binding, the C-terminus of PAN probably interacts with the alpha-rings of the proteasome core by binding to the intersubunit pockets. Interacts with SAMP1-MoaE conjugate in vitro, but does not bind to SAMP1 or MoaE alone. Interacts with NcsA.

It localises to the cytoplasm. With respect to regulation, ATPase activity is inhibited by EDTA in vitro. In terms of biological role, ATPase which is responsible for recognizing, binding, unfolding and translocation of substrate proteins into the archaeal 20S proteasome core particle. Is essential for opening the gate of the 20S proteasome via an interaction with its C-terminus, thereby allowing substrate entry and access to the site of proteolysis. Thus, the C-terminus of the proteasomal ATPase functions like a 'key in a lock' to induce gate opening and therefore regulate proteolysis. Unfolding activity requires energy from ATP hydrolysis, whereas ATP binding alone promotes ATPase-20S proteasome association which triggers gate opening, and supports translocation of unfolded substrates. Is also able to cleave other nucleoside triphosphates including GTP and TTP, but the rate of hydrolysis is 4- to 5-fold slower than for ATP. In Haloferax volcanii (strain ATCC 29605 / DSM 3757 / JCM 8879 / NBRC 14742 / NCIMB 2012 / VKM B-1768 / DS2) (Halobacterium volcanii), this protein is Proteasome-activating nucleotidase 1.